The primary structure comprises 92 residues: YcgL domain-containing protein SO_2575 (92 aa).

One can recognise a YcgL domain in the interval Met1–Arg85.

This chain is YcgL domain-containing protein SO_2575, found in Shewanella oneidensis (strain ATCC 700550 / JCM 31522 / CIP 106686 / LMG 19005 / NCIMB 14063 / MR-1).